A 483-amino-acid polypeptide reads, in one-letter code: MIMKNGIVYFVGAGPGDPGLLTIKGKQALKEADVILYDRLANPKLLEFASPDCQFIYCGKLPNRHFMKQKEINALLVEKALNGLTVVRLKGGDPSVFGRVGEEADALHEHGIRYEMVPGITSGIAAPLYAGIPVTHRDFASSFAMITAHDKSLKGTPNLDWEGLARSVQTLVFYMGVKNLSYICQQLISYGKSPSVPVIVIQWGTWGRQRSVKGTLENIQQKVQEHQITNPAIIVIGDIVNFQTHSWFESKPLIGRHLMVVTHGEDEDPLADKLRDSGADLIEWPKWRTENMPVNEEILRKIGTFEDVFFTSRRAVCEFFRALASQKIDIRQLTAKLSAASEQAKTELEKRGFLVTAIQPDSEKRLVVGSRHAVENMQKHESCSFYITHENVIDDRFTHMIQRTISESPLHMVICPNKLSVQQLINGGEQIGILPEPSASRPPIVCIGDDSAAGIYGFTAVQEQDELLAFIHNQHAEKKLLHT.

It belongs to the precorrin methyltransferase family.

The enzyme catalyses uroporphyrinogen III + 2 S-adenosyl-L-methionine = precorrin-2 + 2 S-adenosyl-L-homocysteine + H(+). The protein is Uroporphyrinogen-III C-methyltransferase (nasF) of Bacillus subtilis (strain 168).